The primary structure comprises 647 residues: Meiotically up-regulated protein C8C9.04 (647 aa).

Disordered stretches follow at residues 1-241 (MTTN…ELKP) and 387-647 (RAQQ…KLFH). The span at 29 to 46 (KSTNAVEQNNNSSQASVT) shows a compositional bias: polar residues. The span at 49-67 (NKKKAAKRAKKKAAKKKKQ) shows a compositional bias: basic residues. Polar residues predominate over residues 92–103 (TILQEPGFTQTI). Positions 134–145 (PSASTSTAVPTT) are enriched in low complexity. Polar residues predominate over residues 146-155 (EARNTSITEP). Residues 156-177 (ANSPSSSSSSASTKSTATTQSA) show a composition bias toward low complexity. 2 positions are modified to phosphoserine: Ser-162 and Ser-165. Residue Thr-168 is modified to Phosphothreonine. The segment covering 193 to 215 (QLGNSPASITSKPATTSAAQPSS) has biased composition (polar residues). 2 positions are modified to phosphoserine: Ser-197 and Ser-200. The span at 232-241 (AEKEIPELKP) shows a compositional bias: basic and acidic residues. Polar residues-rich tracts occupy residues 390 to 406 (QPEQYESSVVQEATETV), 413 to 432 (VSSTVKNEVNVPSTIPTESE), and 488 to 508 (PSSTGQEPTTPSTPAKSAQSS). Ser-396 carries the post-translational modification Phosphoserine. Phosphoserine occurs at positions 489 and 490. Thr-491 is modified (phosphothreonine). Phosphoserine is present on residues Ser-515, Ser-519, and Ser-523. A compositionally biased stretch (low complexity) spans 518–530 (ASAPSSPGTTSAA). Residues 561-589 (GSATTIPSPGSATTKPTPGSATTKPTPVS) show a composition bias toward polar residues. The segment covering 596-613 (AGTTKPAPAAGATATAEN) has biased composition (low complexity). Basic residues predominate over residues 633 to 647 (SWFKRMKKSFGKLFH).

Functionally, has a role in meiosis and sporulation. The sequence is that of Meiotically up-regulated protein C8C9.04 from Schizosaccharomyces pombe (strain 972 / ATCC 24843) (Fission yeast).